The primary structure comprises 232 residues: Orotidine 5'-phosphate decarboxylase (232 aa).

Substrate is bound by residues D16, K38, 65-74 (DLKLHDIGNT), T119, R180, Q189, G209, and R210. K67 serves as the catalytic Proton donor.

The protein belongs to the OMP decarboxylase family. Type 1 subfamily. Homodimer.

The catalysed reaction is orotidine 5'-phosphate + H(+) = UMP + CO2. It functions in the pathway pyrimidine metabolism; UMP biosynthesis via de novo pathway; UMP from orotate: step 2/2. Its function is as follows. Catalyzes the decarboxylation of orotidine 5'-monophosphate (OMP) to uridine 5'-monophosphate (UMP). The protein is Orotidine 5'-phosphate decarboxylase of Methylorubrum populi (strain ATCC BAA-705 / NCIMB 13946 / BJ001) (Methylobacterium populi).